The following is a 933-amino-acid chain: C-1-tetrahydrofolate synthase, cytoplasmic (933 aa).

Positions 1-303 (MWEPQGSLDP…DRLLAPTWPL (303 aa)) are methylenetetrahydrofolate dehydrogenase and cyclohydrolase. Substrate is bound by residues 51-55 (YIRMK) and 98-100 (VQM). NADP(+)-binding positions include 170–172 (GRS) and serine 195. 270-274 (PGGVG) contributes to the substrate binding site. The formyltetrahydrofolate synthetase stretch occupies residues 304–933 (RPLRITPLSP…TKTGEIEGLF (630 aa)). Residue 378 to 385 (TPLGEGKS) participates in ATP binding.

In the N-terminal section; belongs to the tetrahydrofolate dehydrogenase/cyclohydrolase family. It in the C-terminal section; belongs to the formate--tetrahydrofolate ligase family. Homodimer.

Its subcellular location is the cytoplasm. It catalyses the reaction (6R)-5,10-methylene-5,6,7,8-tetrahydrofolate + NADP(+) = (6R)-5,10-methenyltetrahydrofolate + NADPH. The catalysed reaction is (6R)-5,10-methenyltetrahydrofolate + H2O = (6R)-10-formyltetrahydrofolate + H(+). It carries out the reaction (6S)-5,6,7,8-tetrahydrofolate + formate + ATP = (6R)-10-formyltetrahydrofolate + ADP + phosphate. It functions in the pathway one-carbon metabolism; tetrahydrofolate interconversion. The sequence is that of C-1-tetrahydrofolate synthase, cytoplasmic from Spodoptera frugiperda (Fall armyworm).